The primary structure comprises 352 residues: Heat-inducible transcription repressor HrcA (352 aa).

The protein belongs to the HrcA family.

Functionally, negative regulator of class I heat shock genes (grpE-dnaK-dnaJ and groELS operons). Prevents heat-shock induction of these operons. This chain is Heat-inducible transcription repressor HrcA, found in Ralstonia nicotianae (strain ATCC BAA-1114 / GMI1000) (Ralstonia solanacearum).